The sequence spans 306 residues: Ribonuclease Z (306 aa).

Residues His63, His65, Asp67, His68, His141, Asp211, and His269 each coordinate Zn(2+). Asp67 functions as the Proton acceptor in the catalytic mechanism.

It belongs to the RNase Z family. Homodimer. Zn(2+) serves as cofactor.

It catalyses the reaction Endonucleolytic cleavage of RNA, removing extra 3' nucleotides from tRNA precursor, generating 3' termini of tRNAs. A 3'-hydroxy group is left at the tRNA terminus and a 5'-phosphoryl group is left at the trailer molecule.. In terms of biological role, zinc phosphodiesterase, which displays some tRNA 3'-processing endonuclease activity. Probably involved in tRNA maturation, by removing a 3'-trailer from precursor tRNA. The protein is Ribonuclease Z of Staphylococcus carnosus (strain TM300).